A 106-amino-acid polypeptide reads, in one-letter code: Large ribosomal subunit protein eL42 (106 aa).

This sequence belongs to the eukaryotic ribosomal protein eL42 family. In terms of assembly, component of the large ribosomal subunit.

The protein localises to the cytoplasm. Component of the large ribosomal subunit. The ribosome is a large ribonucleoprotein complex responsible for the synthesis of proteins in the cell. The polypeptide is Large ribosomal subunit protein eL42 (RPL36A) (Papio anubis (Olive baboon)).